A 341-amino-acid polypeptide reads, in one-letter code: Methionine import ATP-binding protein MetN (341 aa).

Residues 2–241 (IELNQIVKRY…PQHDVTKRFV (240 aa)) enclose the ABC transporter domain. 38–45 (GFSGAGKS) contacts ATP.

It belongs to the ABC transporter superfamily. Methionine importer (TC 3.A.1.24) family. As to quaternary structure, the complex is composed of two ATP-binding proteins (MetN), two transmembrane proteins (MetI) and a solute-binding protein (MetQ).

It is found in the cell membrane. The catalysed reaction is L-methionine(out) + ATP + H2O = L-methionine(in) + ADP + phosphate + H(+). It catalyses the reaction D-methionine(out) + ATP + H2O = D-methionine(in) + ADP + phosphate + H(+). Its function is as follows. Part of the ABC transporter complex MetNIQ involved in methionine import. Responsible for energy coupling to the transport system. The polypeptide is Methionine import ATP-binding protein MetN (Staphylococcus saprophyticus subsp. saprophyticus (strain ATCC 15305 / DSM 20229 / NCIMB 8711 / NCTC 7292 / S-41)).